Consider the following 205-residue polypeptide: 2-dehydro-3-deoxy-6-phosphogalactonate aldolase (205 aa).

A 2-dehydro-3-deoxy-6-phospho-D-galactonate-binding site is contributed by Arg14. Residue Glu37 is the Proton donor/acceptor of the active site. Positions 66, 126, 156, 176, and 177 each coordinate 2-dehydro-3-deoxy-6-phospho-D-galactonate. Lys126 acts as the Schiff-base intermediate with substrate in catalysis.

It belongs to the KHG/KDPG aldolase family. Homotrimer.

The enzyme catalyses 2-dehydro-3-deoxy-6-phospho-D-galactonate = D-glyceraldehyde 3-phosphate + pyruvate. Its pathway is carbohydrate acid metabolism; D-galactonate degradation; D-glyceraldehyde 3-phosphate and pyruvate from D-galactonate: step 3/3. Its function is as follows. Involved in the degradation of galactose via the DeLey-Doudoroff pathway. Catalyzes the reversible, stereospecific retro-aldol cleavage of 2-keto-3-deoxy-6-phosphogalactonate (KDPGal) to pyruvate and D-glyceraldehyde-3-phosphate. In the synthetic direction, it catalyzes the addition of pyruvate to electrophilic aldehydes with re-facial selectivity. It can use a limited number of aldehyde substrates, including D-glyceraldehyde-3-phosphate (natural substrate), D-glyceraldehyde, glycolaldehyde, 2-pyridinecarboxaldehyde, D-ribose, D-erythrose and D-threose. It efficiently catalyzes aldol addition only using pyruvate as the nucleophilic component and accepts both stereochemical configurations at C2 of the electrophile. The polypeptide is 2-dehydro-3-deoxy-6-phosphogalactonate aldolase (dgoA) (Escherichia coli (strain K12)).